Reading from the N-terminus, the 285-residue chain is Phosphoribosylaminoimidazole-succinocarboxamide synthase (285 aa).

The protein belongs to the SAICAR synthetase family.

The enzyme catalyses 5-amino-1-(5-phospho-D-ribosyl)imidazole-4-carboxylate + L-aspartate + ATP = (2S)-2-[5-amino-1-(5-phospho-beta-D-ribosyl)imidazole-4-carboxamido]succinate + ADP + phosphate + 2 H(+). Its pathway is purine metabolism; IMP biosynthesis via de novo pathway; 5-amino-1-(5-phospho-D-ribosyl)imidazole-4-carboxamide from 5-amino-1-(5-phospho-D-ribosyl)imidazole-4-carboxylate: step 1/2. This is Phosphoribosylaminoimidazole-succinocarboxamide synthase from Leptospira interrogans serogroup Icterohaemorrhagiae serovar copenhageni (strain Fiocruz L1-130).